The primary structure comprises 545 residues: MAKRIIYNEQARRALERGIDILAESVAVTLGPKGRNVVLEKKFGAPQIINDGVTIAKEIELEDHIENTGVALIRQAASKTNDAAGDGTTTATVLAHAMVKAGLRNVAAGANAITLKKGIDKATEFLVGKIQDNSKPISDSNAIAQCGTIAAGNDEEVGQMIANAMDKVGKEGVISLEEGKSMTTELEVTEGMRFDKGYISPYFATDTERMEAVLDEPYILLTDKKIALVQDLVPVLEQIAKTGKPLVIIAEDIEKEALATLVVNRLRGVLNVAAVKAPGFGDRRKAMLEDMAVLTNGQLITEDAGLKLENATLDMLGTGRRITINKETTTIVAEGNEQAVKARCDQIKKQMDETDSSYDKEKLQERLAKLAGGVAVIKVGAATETEMKDKKLRLEDAINATKAAVEEGIVPGGGTTLAHLSPILKEWADKNLKGEELIGANIVEASLTAPLMRIAENAGSNGAVIAENVKTKPFNDGFNAATGEYVDMSSAGIVDPAKVTRSGLQNAASIAGMVLTTECIVADLPEKKDSASPAGAPGMGGDFDY.

Residues 29-32 (TLGP), 86-90 (DGTTT), Gly413, 479-481 (NAA), and Asp495 each bind ATP.

The protein belongs to the chaperonin (HSP60) family. In terms of assembly, forms a cylinder of 14 subunits composed of two heptameric rings stacked back-to-back. Interacts with the co-chaperonin GroES.

Its subcellular location is the cytoplasm. The enzyme catalyses ATP + H2O + a folded polypeptide = ADP + phosphate + an unfolded polypeptide.. Together with its co-chaperonin GroES, plays an essential role in assisting protein folding. The GroEL-GroES system forms a nano-cage that allows encapsulation of the non-native substrate proteins and provides a physical environment optimized to promote and accelerate protein folding. The sequence is that of Chaperonin GroEL 2 from Prochlorococcus marinus (strain MIT 9215).